The chain runs to 305 residues: Glycine--tRNA ligase alpha subunit (305 aa).

It belongs to the class-II aminoacyl-tRNA synthetase family. In terms of assembly, tetramer of two alpha and two beta subunits.

The protein localises to the cytoplasm. The enzyme catalyses tRNA(Gly) + glycine + ATP = glycyl-tRNA(Gly) + AMP + diphosphate. The sequence is that of Glycine--tRNA ligase alpha subunit from Vibrio campbellii (strain ATCC BAA-1116).